Here is a 109-residue protein sequence, read N- to C-terminus: Small ribosomal subunit protein uS15c (109 aa).

The protein belongs to the universal ribosomal protein uS15 family. In terms of assembly, part of the 30S ribosomal subunit.

It localises to the plastid. The protein resides in the chloroplast. The polypeptide is Small ribosomal subunit protein uS15c (rps15-A) (Trachelium caeruleum (Blue throatwort)).